A 476-amino-acid polypeptide reads, in one-letter code: MTKPQQQSPPSTTATTTTSPPPPPPSTPPPASSSSSSLAKLPLRLHSLASSSRSLLSALRRSPVTTLVAAFFLLALFMYGEDVRTLAELSIDDYLYPDADFYNVSALPPLLLPPPTCDLSRGRWVFDNTSLPAYREKECTFLTKQVSCLANGRPDDLWQYWRWQPNNCSLPTFDARRFMEKMRGKRMMFVGDSLNRNQWESLVCLVQPILSKGRKKIVKRGSFNIFYAKEYRATLEFYWAPFLVESNSDNPNFHHIDQRIISPERIESHANNWKDVDYLIFNTYIWWMNNEDIKVRRPNSTSWSDHDEVPRIETYGRVFKTWSTWLEQNVDPARTSVFFMTISPLHNSPAQWGNPNGIKCVKETLPVLNYTKPLDLNHDMRMYDLVAKVAKNMKNVPVSLIDITRMSDYRKDAHTSLYSIRQGKLLTPEQKADPQKYADCIHWCLPGVPDVWNQILYTRILSKSSPPSPHPPLPPQ.

The interval 1–37 (MTKPQQQSPPSTTATTTTSPPPPPPSTPPPASSSSSS) is disordered. Residues 1 to 63 (MTKPQQQSPP…SLLSALRRSP (63 aa)) are Cytoplasmic-facing. A compositionally biased stretch (low complexity) spans 8-18 (SPPSTTATTTT). The segment covering 19-31 (SPPPPPPSTPPPA) has biased composition (pro residues). A helical; Signal-anchor for type II membrane protein transmembrane segment spans residues 64-80 (VTTLVAAFFLLALFMYG). Residues 81-476 (EDVRTLAELS…PSPHPPLPPQ (396 aa)) are Lumenal-facing. 3 N-linked (GlcNAc...) asparagine glycosylation sites follow: Asn-103, Asn-128, and Asn-167. Intrachain disulfides connect Cys-117–Cys-168, Cys-139–Cys-204, Cys-148–Cys-444, and Cys-360–Cys-440. The GDS motif signature appears at 191-193 (GDS). The Nucleophile role is filled by Ser-193. Residues Asn-299 and Asn-369 are each glycosylated (N-linked (GlcNAc...) asparagine). The active-site Proton donor is the Asp-439. Positions 439–442 (DCIH) match the DXXH motif motif. The active-site Proton acceptor is the His-442.

Belongs to the PC-esterase family. TBL subfamily. As to expression, highly expressed in leaves. Expressed in roots, stems and inflorescences.

The protein resides in the golgi apparatus membrane. Functionally, xylan acetyltransferase required for 2-O- and 3-O-monoacetylation of xylosyl residues in xylan. Catalyzes the 2-O-acetylation of xylan, followed by nonenzymatic acetyl migration to the O-3 position, resulting in products that are monoacetylated at both O-2 and O-3 positions. The protein is Xylan O-acetyltransferase 4 of Oryza sativa subsp. japonica (Rice).